The sequence spans 352 residues: Cobalt transport protein NhlF (352 aa).

The next 8 helical transmembrane spans lie at 23–43, 46–66, 95–115, 131–151, 206–226, 230–250, 290–310, and 323–343; these read LASV…LYLG, GNPA…VLGV, VGFF…LVVA, EIGG…VAGL, PVGL…LLTL, AATG…LFAA, VIGL…LPMF, and FEFL…GALL.

It belongs to the NiCoT transporter (TC 2.A.52) family.

It localises to the cell membrane. With respect to regulation, cobalt uptake is inhibited by uncouplers (CCCP and 3,5-di-tert-butyl-4-hydroxybenzylidenemalononitrile) and by the addition of excess nickel. In terms of biological role, mediates energy-dependent uptake of cobalt ions into the cell. Can also transport nickel ions, but cobalt is the preferred substrate. The chain is Cobalt transport protein NhlF (nhlF) from Rhodococcus rhodochrous.